The sequence spans 187 residues: MSEYKNALPRLHQRYEDVLKKQLREQFGYANELQVPKLEKIVLNMGVGEAAGDQKKLDAAVAEMTVISGQKPVKTLARKAIAGFKIREGLPIGCKVTLRRARMYEFLDRLVTIAMPRIRDFRGLPANKGFDGHGNFAMGIKEQIVFPEIEYDKIDAVRGMDIIFVTSAKSDAEAKALLKAFDLPFNG.

This sequence belongs to the universal ribosomal protein uL5 family. Part of the 50S ribosomal subunit; part of the 5S rRNA/L5/L18/L25 subcomplex. Contacts the 5S rRNA and the P site tRNA. Forms a bridge to the 30S subunit in the 70S ribosome.

Functionally, this is one of the proteins that bind and probably mediate the attachment of the 5S RNA into the large ribosomal subunit, where it forms part of the central protuberance. In the 70S ribosome it contacts protein S13 of the 30S subunit (bridge B1b), connecting the 2 subunits; this bridge is implicated in subunit movement. Contacts the P site tRNA; the 5S rRNA and some of its associated proteins might help stabilize positioning of ribosome-bound tRNAs. The sequence is that of Large ribosomal subunit protein uL5 from Gluconobacter oxydans (strain 621H) (Gluconobacter suboxydans).